Consider the following 546-residue polypeptide: Chaperonin GroEL (546 aa).

ATP is bound by residues 30 to 33, Lys-51, 87 to 91, Gly-415, and Asp-495; these read TLGP and DGTTT.

It belongs to the chaperonin (HSP60) family. Forms a cylinder of 14 subunits composed of two heptameric rings stacked back-to-back. Interacts with the co-chaperonin GroES.

It localises to the cytoplasm. It carries out the reaction ATP + H2O + a folded polypeptide = ADP + phosphate + an unfolded polypeptide.. Its function is as follows. Together with its co-chaperonin GroES, plays an essential role in assisting protein folding. The GroEL-GroES system forms a nano-cage that allows encapsulation of the non-native substrate proteins and provides a physical environment optimized to promote and accelerate protein folding. The polypeptide is Chaperonin GroEL (Brucella anthropi (strain ATCC 49188 / DSM 6882 / CCUG 24695 / JCM 21032 / LMG 3331 / NBRC 15819 / NCTC 12168 / Alc 37) (Ochrobactrum anthropi)).